Here is an 88-residue protein sequence, read N- to C-terminus: Beta-insect excitatory toxin LqhIT1b (88 aa).

The N-terminal stretch at 1–18 is a signal peptide; the sequence is MKFFLLFLVVLPIMGVLG. Positions 20-83 constitute an LCN-type CS-alpha/beta domain; that stretch reads KNGYAVDSKG…ISDTTKKYCD (64 aa). Intrachain disulfides connect Cys-34/Cys-55, Cys-40/Cys-60, Cys-44/Cys-62, and Cys-56/Cys-82.

Belongs to the long (4 C-C) scorpion toxin superfamily. Sodium channel inhibitor family. Beta subfamily. Expressed by the venom gland.

The protein localises to the secreted. In terms of biological role, excitatory insect toxins induce a spastic paralysis. They bind voltage-independently at site-4 of sodium channels (Nav) and shift the voltage of activation toward more negative potentials thereby affecting sodium channel activation and promoting spontaneous and repetitive firing. The polypeptide is Beta-insect excitatory toxin LqhIT1b (Leiurus hebraeus (Hebrew deathstalker scorpion)).